The primary structure comprises 471 residues: ATP synthase subunit beta (471 aa).

154 to 161 (GGAGVGKT) is a binding site for ATP.

This sequence belongs to the ATPase alpha/beta chains family. As to quaternary structure, F-type ATPases have 2 components, CF(1) - the catalytic core - and CF(0) - the membrane proton channel. CF(1) has five subunits: alpha(3), beta(3), gamma(1), delta(1), epsilon(1). CF(0) has three main subunits: a(1), b(2) and c(9-12). The alpha and beta chains form an alternating ring which encloses part of the gamma chain. CF(1) is attached to CF(0) by a central stalk formed by the gamma and epsilon chains, while a peripheral stalk is formed by the delta and b chains.

It is found in the cell membrane. It carries out the reaction ATP + H2O + 4 H(+)(in) = ADP + phosphate + 5 H(+)(out). Produces ATP from ADP in the presence of a proton gradient across the membrane. The catalytic sites are hosted primarily by the beta subunits. The chain is ATP synthase subunit beta from Mesomycoplasma hyopneumoniae (strain 232) (Mycoplasma hyopneumoniae).